The sequence spans 610 residues: Chaperone protein DnaK (610 aa).

The residue at position 173 (T173) is a Phosphothreonine; by autocatalysis. Disordered stretches follow at residues 525–544 (ENIG…ALKT) and 576–610 (AAQQ…DDKK). A compositionally biased stretch (basic and acidic residues) spans 529–542 (EEDKKSAEEKKDAL). Low complexity predominate over residues 576–592 (AAQQQQQAQGANAGQNN). Over residues 599-610 (AEFKEVKDDDKK) the composition is skewed to basic and acidic residues.

Belongs to the heat shock protein 70 family.

Its function is as follows. Acts as a chaperone. This Staphylococcus aureus (strain Mu3 / ATCC 700698) protein is Chaperone protein DnaK.